A 485-amino-acid polypeptide reads, in one-letter code: Aspartyl/glutamyl-tRNA(Asn/Gln) amidotransferase subunit B (485 aa).

This sequence belongs to the GatB/GatE family. GatB subfamily. In terms of assembly, heterotrimer of A, B and C subunits.

It catalyses the reaction L-glutamyl-tRNA(Gln) + L-glutamine + ATP + H2O = L-glutaminyl-tRNA(Gln) + L-glutamate + ADP + phosphate + H(+). It carries out the reaction L-aspartyl-tRNA(Asn) + L-glutamine + ATP + H2O = L-asparaginyl-tRNA(Asn) + L-glutamate + ADP + phosphate + 2 H(+). Allows the formation of correctly charged Asn-tRNA(Asn) or Gln-tRNA(Gln) through the transamidation of misacylated Asp-tRNA(Asn) or Glu-tRNA(Gln) in organisms which lack either or both of asparaginyl-tRNA or glutaminyl-tRNA synthetases. The reaction takes place in the presence of glutamine and ATP through an activated phospho-Asp-tRNA(Asn) or phospho-Glu-tRNA(Gln). In Rhodospirillum rubrum (strain ATCC 11170 / ATH 1.1.1 / DSM 467 / LMG 4362 / NCIMB 8255 / S1), this protein is Aspartyl/glutamyl-tRNA(Asn/Gln) amidotransferase subunit B.